Reading from the N-terminus, the 102-residue chain is PqqA binding protein (102 aa).

The protein belongs to the PqqD family. Monomer. Interacts with PqqE.

Its pathway is cofactor biosynthesis; pyrroloquinoline quinone biosynthesis. Functionally, functions as a PqqA binding protein and presents PqqA to PqqE, in the pyrroloquinoline quinone (PQQ) biosynthetic pathway. This chain is PqqA binding protein, found in Rhodopseudomonas palustris (strain ATCC BAA-98 / CGA009).